A 451-amino-acid chain; its full sequence is Phosphoglucosamine mutase (451 aa).

Catalysis depends on serine 102, which acts as the Phosphoserine intermediate. The Mg(2+) site is built by serine 102, aspartate 243, aspartate 245, and aspartate 247. Residue serine 102 is modified to Phosphoserine.

The protein belongs to the phosphohexose mutase family. Requires Mg(2+) as cofactor. Activated by phosphorylation.

It carries out the reaction alpha-D-glucosamine 1-phosphate = D-glucosamine 6-phosphate. Functionally, catalyzes the conversion of glucosamine-6-phosphate to glucosamine-1-phosphate. In Sinorhizobium medicae (strain WSM419) (Ensifer medicae), this protein is Phosphoglucosamine mutase.